Here is a 78-residue protein sequence, read N- to C-terminus: Small ribosomal subunit protein bS18 (78 aa).

Belongs to the bacterial ribosomal protein bS18 family. In terms of assembly, part of the 30S ribosomal subunit. Forms a tight heterodimer with protein bS6.

In terms of biological role, binds as a heterodimer with protein bS6 to the central domain of the 16S rRNA, where it helps stabilize the platform of the 30S subunit. The polypeptide is Small ribosomal subunit protein bS18 (Acidothermus cellulolyticus (strain ATCC 43068 / DSM 8971 / 11B)).